Reading from the N-terminus, the 51-residue chain is Bacteriocin aureocin A53 (51 aa).

An N-formylmethionine modification is found at methionine 1.

Its subcellular location is the secreted. Its function is as follows. Antibacterial peptide active against a broad range of lactic acid bacteria, L.monocytogenes and many epidemiologically unrelated strains of S.aureus involved in bovine mastitis. The sequence is that of Bacteriocin aureocin A53 (aucA) from Staphylococcus aureus.